Consider the following 420-residue polypeptide: Argininosuccinate synthase (420 aa).

11 to 19 is a binding site for ATP; sequence AFSGGLDTT. Residue Tyr-88 coordinates L-citrulline. An ATP-binding site is contributed by Gly-118. Residues Thr-120, Asn-124, and Asp-125 each coordinate L-aspartate. Asn-124 is a binding site for L-citrulline. L-citrulline contacts are provided by Arg-128, Ser-174, Ser-183, Glu-257, and Tyr-269. The interval 401-420 is disordered; it reads KGAAVTDGSGDHAASEDTEE. Positions 409 to 420 are enriched in basic and acidic residues; sequence SGDHAASEDTEE.

This sequence belongs to the argininosuccinate synthase family. Type 1 subfamily. As to quaternary structure, homotetramer.

The protein localises to the cytoplasm. The enzyme catalyses L-citrulline + L-aspartate + ATP = 2-(N(omega)-L-arginino)succinate + AMP + diphosphate + H(+). Its pathway is amino-acid biosynthesis; L-arginine biosynthesis; L-arginine from L-ornithine and carbamoyl phosphate: step 2/3. In Haloarcula marismortui (strain ATCC 43049 / DSM 3752 / JCM 8966 / VKM B-1809) (Halobacterium marismortui), this protein is Argininosuccinate synthase.